Reading from the N-terminus, the 119-residue chain is Large ribosomal subunit protein bL20 (119 aa).

The protein belongs to the bacterial ribosomal protein bL20 family.

Functionally, binds directly to 23S ribosomal RNA and is necessary for the in vitro assembly process of the 50S ribosomal subunit. It is not involved in the protein synthesizing functions of that subunit. The chain is Large ribosomal subunit protein bL20 from Burkholderia cenocepacia (strain HI2424).